The chain runs to 661 residues: Pentatricopeptide repeat-containing protein At3g04750, mitochondrial (661 aa).

Residues 1 to 18 (MCFVLLLRRGFRLFGTEC) constitute a mitochondrion transit peptide. 13 PPR repeats span residues 99 to 131 (NVFVYNTMISAVSSSKNECFGLYSSMIRHRVSP), 132 to 163 (DRQTFLYLMKASSFLSEVKQIHCHIIVSGCLS), 165 to 195 (GNYLWNSLVKFYMELGNFGVAEKVFARMPHP), 196 to 230 (DVSSFNVMIVGYAKQGFSLEALKLYFKMVSDGIEP), 231 to 265 (DEYTVLSLLVCCGHLSDIRLGKGVHGWIERRGPVY), 268 to 298 (NLILSNALLDMYFKCKESGLAKRAFDAMKKK), 299 to 333 (DMRSWNTMVVGFVRLGDMEAAQAVFDQMPKRDLVS), 334 to 366 (WNSLLFGYSKKGCDQRTVRELFYEMTIVEKVKP), 367 to 401 (DRVTMVSLISGAANNGELSHGRWVHGLVIRLQLKG), 402 to 432 (DAFLSSALIDMYCKCGIIERAFMVFKTATEK), 433 to 467 (DVALWTSMITGLAFHGNGQQALQLFGRMQEEGVTP), 468 to 498 (NNVTLLAVLTACSHSGLVEEGLHVFNHMKDK), and 504 to 539 (ETEHYGSLVDLLCRAGRVEEAKDIVQKKMPMRPSQS). The tract at residues 540 to 615 (MWGSILSACR…TAGYSSVVGV (76 aa)) is type E motif. The type E(+) motif stretch occupies residues 616–647 (EGLHRFVAAEKQNHPRWTEIKRILQHLYNEMK).

Belongs to the PPR family. PCMP-E subfamily.

It is found in the mitochondrion. This chain is Pentatricopeptide repeat-containing protein At3g04750, mitochondrial (PCMP-E81), found in Arabidopsis thaliana (Mouse-ear cress).